A 397-amino-acid chain; its full sequence is Phosphoribulokinase, chloroplastic (397 aa).

The transit peptide at 1–44 directs the protein to the chloroplast; the sequence is MAVSAYTVPTTSHLGFNQKKQLFFCNKSAYKRVSFSSRPCVITC. The cysteines at positions 62 and 101 are disulfide-linked.

The protein belongs to the phosphoribulokinase family.

The protein resides in the plastid. It is found in the chloroplast. The catalysed reaction is D-ribulose 5-phosphate + ATP = D-ribulose 1,5-bisphosphate + ADP + H(+). Its pathway is carbohydrate biosynthesis; Calvin cycle. Its activity is regulated as follows. Light regulated via thioredoxin by reversible oxidation/reduction of sulfhydryl/disulfide groups. In Mesembryanthemum crystallinum (Common ice plant), this protein is Phosphoribulokinase, chloroplastic.